The following is a 575-amino-acid chain: Thrombomodulin (575 aa).

The signal sequence occupies residues 1–18 (MLGVLVLGALALAGLGFP). Residues 19-515 (APAEPQPGGS…TPPAVGLVHS (497 aa)) are Extracellular-facing. The region spanning 31-169 (VEHDCFALYP…VKADGFLCEF (139 aa)) is the C-type lectin domain. N-linked (GlcNAc...) asparagine glycosylation is found at Asn-47, Asn-115, and Asn-116. 19 disulfides stabilise this stretch: Cys-137–Cys-158, Cys-245–Cys-256, Cys-252–Cys-265, Cys-267–Cys-280, Cys-288–Cys-296, Cys-292–Cys-308, Cys-310–Cys-323, Cys-329–Cys-340, Cys-336–Cys-349, Cys-351–Cys-362, Cys-369–Cys-378, Cys-374–Cys-388, Cys-390–Cys-404, Cys-408–Cys-413, Cys-417–Cys-425, Cys-427–Cys-439, Cys-445–Cys-455, Cys-451–Cys-464, and Cys-466–Cys-480. EGF-like domains follow at residues 241-281 (GAWD…RSCT) and 284-324 (ATQS…HRCE). In terms of domain architecture, EGF-like 3; calcium-binding spans 325–363 (DVDDCILEPSPCPQRCVNTQGGFECHCYPNYDLVDGECV). The residue at position 342 (Asn-342) is a (3R)-3-hydroxyasparagine. EGF-like domains follow at residues 365-405 (PVDP…HRCQ) and 404-440 (CQMF…FICT). N-linked (GlcNAc...) asparagine glycosylation occurs at Asn-382. Asn-409 carries an N-linked (GlcNAc...) asparagine glycan. The 41-residue stretch at 441–481 (DIDECENGGFCSGVCHNLPGTFECICGPDSALARHIGTDCD) folds into the EGF-like 6; calcium-binding domain. An involved in alpha-L/beta-2 and alpha-M/beta-2 integrin binding region spans residues 481–515 (DSGKVDGGDSGSGEPPPSPTPGSTLTPPAVGLVHS). The segment at 484–506 (KVDGGDSGSGEPPPSPTPGSTLT) is disordered. Ser-490 and Ser-492 each carry an O-linked (Xyl...) (chondroitin sulfate) serine glycan. Residues 516 to 539 (GLLIGISIASLCLVVALLALLCHL) form a helical membrane-spanning segment. At 540–575 (RKKQGAARAKMEYKCAAPSKEVVLQHVRTERTPQRL) the chain is on the cytoplasmic side.

In terms of assembly, interacts with ITGAL, ITGAM and ITGB2. Interacts with thrombin/F2; this interaction switches the specificity of thrombin from a procoagulant to an anticoagulant and antifibrinolytic protease. Interacts with ANGP1 and ANGP2; these interactions significantly inhibit the generation of activated PC and TAFIa/CPB2 by the thrombin/thrombomodulin complex. Interacts with PF4; this interaction enhances generation of activated protein C. Interacts with HMGB1; this interaction inhibits HMGB1 inflammatory activity. Post-translationally, N-glycosylated. The iron and 2-oxoglutarate dependent 3-hydroxylation of aspartate and asparagine is (R) stereospecific within EGF domains. In terms of tissue distribution, endothelial cells are unique in synthesizing thrombomodulin.

The protein resides in the membrane. In terms of biological role, endothelial cell receptor that plays a critical role in regulating several physiological processes including hemostasis, coagulation, fibrinolysis, inflammation, and angiogenesis. Acts as a cofactor for thrombin activation of protein C/PROC on the surface of vascular endothelial cells leading to initiation of the activated protein C anticoagulant pathway. Also accelerates the activation of the plasma carboxypeptidase B2/CPB2, which catalyzes removal of C-terminal basic amino acids from its substrates including kinins or anaphylatoxins leading to fibrinolysis inhibition. Plays critical protective roles in changing the cleavage specificity of protease-activated receptor 1/PAR1, inhibiting endothelial cell permeability and inflammation. Suppresses inflammation distinctly from its anticoagulant cofactor activity by sequestering HMGB1 thereby preventing it from engaging cellular receptors such as RAGE and contributing to the inflammatory response. This is Thrombomodulin (THBD) from Homo sapiens (Human).